The sequence spans 193 residues: UPF0301 protein Fphi_1754 (193 aa).

This sequence belongs to the UPF0301 (AlgH) family.

The polypeptide is UPF0301 protein Fphi_1754 (Francisella philomiragia subsp. philomiragia (strain ATCC 25017 / CCUG 19701 / FSC 153 / O#319-036)).